We begin with the raw amino-acid sequence, 391 residues long: 3-ketoacyl-CoA thiolase (391 aa).

Cys95 serves as the catalytic Acyl-thioester intermediate. Catalysis depends on proton acceptor residues His347 and Cys377.

This sequence belongs to the thiolase-like superfamily. Thiolase family. Heterotetramer of two alpha chains (FadB) and two beta chains (FadA).

The protein resides in the cytoplasm. It catalyses the reaction an acyl-CoA + acetyl-CoA = a 3-oxoacyl-CoA + CoA. It functions in the pathway lipid metabolism; fatty acid beta-oxidation. Functionally, catalyzes the final step of fatty acid oxidation in which acetyl-CoA is released and the CoA ester of a fatty acid two carbons shorter is formed. In Marinomonas sp. (strain MWYL1), this protein is 3-ketoacyl-CoA thiolase.